The primary structure comprises 152 residues: 3-hydroxyacyl-[acyl-carrier-protein] dehydratase FabZ (152 aa).

His58 is a catalytic residue.

It belongs to the thioester dehydratase family. FabZ subfamily.

It is found in the cytoplasm. The catalysed reaction is a (3R)-hydroxyacyl-[ACP] = a (2E)-enoyl-[ACP] + H2O. Functionally, involved in unsaturated fatty acids biosynthesis. Catalyzes the dehydration of short chain beta-hydroxyacyl-ACPs and long chain saturated and unsaturated beta-hydroxyacyl-ACPs. The chain is 3-hydroxyacyl-[acyl-carrier-protein] dehydratase FabZ from Prochlorococcus marinus (strain MIT 9215).